The primary structure comprises 196 residues: Small ribosomal subunit protein uS4c (196 aa).

The tract at residues Gly16–Phe36 is disordered. Residues Met89–Leu169 enclose the S4 RNA-binding domain.

This sequence belongs to the universal ribosomal protein uS4 family. As to quaternary structure, part of the 30S ribosomal subunit. Contacts protein S5. The interaction surface between S4 and S5 is involved in control of translational fidelity.

The protein resides in the plastid. The protein localises to the chloroplast. Functionally, one of the primary rRNA binding proteins, it binds directly to 16S rRNA where it nucleates assembly of the body of the 30S subunit. With S5 and S12 plays an important role in translational accuracy. The chain is Small ribosomal subunit protein uS4c (rps4) from Cinna latifolia (Drooping woodreed).